Reading from the N-terminus, the 288-residue chain is Probable endonuclease 4 (288 aa).

The Zn(2+) site is built by His-75, His-115, Glu-153, Asp-187, His-190, His-224, Asp-237, His-239, and Glu-269.

This sequence belongs to the AP endonuclease 2 family. The cofactor is Zn(2+).

The enzyme catalyses Endonucleolytic cleavage to 5'-phosphooligonucleotide end-products.. Endonuclease IV plays a role in DNA repair. It cleaves phosphodiester bonds at apurinic or apyrimidinic (AP) sites, generating a 3'-hydroxyl group and a 5'-terminal sugar phosphate. In Chlamydia muridarum (strain MoPn / Nigg), this protein is Probable endonuclease 4.